A 78-amino-acid chain; its full sequence is Small ribosomal subunit protein bS20 (78 aa).

The protein belongs to the bacterial ribosomal protein bS20 family.

Its function is as follows. Binds directly to 16S ribosomal RNA. The protein is Small ribosomal subunit protein bS20 of Streptococcus pneumoniae serotype 19F (strain G54).